We begin with the raw amino-acid sequence, 105 residues long: UPF0235 protein RP839 (105 aa).

This sequence belongs to the UPF0235 family.

This chain is UPF0235 protein RP839, found in Rickettsia prowazekii (strain Madrid E).